A 147-amino-acid chain; its full sequence is Large ribosomal subunit protein uL13 (147 aa).

This sequence belongs to the universal ribosomal protein uL13 family. Part of the 50S ribosomal subunit.

In terms of biological role, this protein is one of the early assembly proteins of the 50S ribosomal subunit, although it is not seen to bind rRNA by itself. It is important during the early stages of 50S assembly. This is Large ribosomal subunit protein uL13 from Latilactobacillus sakei subsp. sakei (strain 23K) (Lactobacillus sakei subsp. sakei).